Consider the following 289-residue polypeptide: Acetyl-coenzyme A carboxylase carboxyl transferase subunit beta (289 aa).

A CoA carboxyltransferase N-terminal domain is found at 28-289; sequence LWSKCPSCEA…ALLQKLPAAA (262 aa). The Zn(2+) site is built by Cys-32, Cys-35, Cys-51, and Cys-54. The C4-type zinc finger occupies 32–54; it reads CPSCEAVLYATDLENNLQVCPKC.

This sequence belongs to the AccD/PCCB family. In terms of assembly, acetyl-CoA carboxylase is a heterohexamer composed of biotin carboxyl carrier protein (AccB), biotin carboxylase (AccC) and two subunits each of ACCase subunit alpha (AccA) and ACCase subunit beta (AccD). Zn(2+) is required as a cofactor.

The protein resides in the cytoplasm. It catalyses the reaction N(6)-carboxybiotinyl-L-lysyl-[protein] + acetyl-CoA = N(6)-biotinyl-L-lysyl-[protein] + malonyl-CoA. Its pathway is lipid metabolism; malonyl-CoA biosynthesis; malonyl-CoA from acetyl-CoA: step 1/1. Component of the acetyl coenzyme A carboxylase (ACC) complex. Biotin carboxylase (BC) catalyzes the carboxylation of biotin on its carrier protein (BCCP) and then the CO(2) group is transferred by the transcarboxylase to acetyl-CoA to form malonyl-CoA. The sequence is that of Acetyl-coenzyme A carboxylase carboxyl transferase subunit beta from Dechloromonas aromatica (strain RCB).